The following is a 58-amino-acid chain: Small ribosomal subunit protein bS21 (58 aa).

The segment at 39-58 (EKPSVKRKRKSEVARKRKKF) is disordered. Basic residues predominate over residues 43-58 (VKRKRKSEVARKRKKF).

This sequence belongs to the bacterial ribosomal protein bS21 family.

The sequence is that of Small ribosomal subunit protein bS21 from Streptococcus pneumoniae (strain ATCC BAA-255 / R6).